Reading from the N-terminus, the 306-residue chain is Agmatinase (306 aa).

Residues H126, D149, H151, D153, D230, and D232 each contribute to the Mn(2+) site.

It belongs to the arginase family. Agmatinase subfamily. It depends on Mn(2+) as a cofactor.

The catalysed reaction is agmatine + H2O = urea + putrescine. Its pathway is amine and polyamine biosynthesis; putrescine biosynthesis via agmatine pathway; putrescine from agmatine: step 1/1. Catalyzes the formation of putrescine from agmatine. In Klebsiella pneumoniae (strain 342), this protein is Agmatinase.